A 130-amino-acid chain; its full sequence is Small ribosomal subunit protein uS11 (130 aa).

It belongs to the universal ribosomal protein uS11 family. In terms of assembly, part of the 30S ribosomal subunit.

Located on the platform of the 30S subunit. This is Small ribosomal subunit protein uS11 from Ignicoccus hospitalis (strain KIN4/I / DSM 18386 / JCM 14125).